Here is a 190-residue protein sequence, read N- to C-terminus: Interferon alpha-9 (190 aa).

Positions 1-23 (MARPFAFLMVLVVISYWSTCSLG) are cleaved as a signal peptide. 2 cysteine pairs are disulfide-bonded: cysteine 24-cysteine 122 and cysteine 52-cysteine 162. Asparagine 101 carries N-linked (GlcNAc...) asparagine glycosylation.

Belongs to the alpha/beta interferon family.

It localises to the secreted. In terms of biological role, produced by macrophages, IFN-alpha have antiviral activities. Interferon stimulates the production of two enzymes: a protein kinase and an oligoadenylate synthetase. In Mus musculus (Mouse), this protein is Interferon alpha-9 (Ifna9).